We begin with the raw amino-acid sequence, 452 residues long: Probable ECA polymerase (452 aa).

The next 11 membrane-spanning stretches (helical) occupy residues 6–26, 37–57, 63–83, 118–138, 155–175, 181–201, 207–227, 228–248, 341–361, 378–398, and 410–430; these read FSGL…LTWF, VFFS…TSVL, VGVA…CFYG, VILM…NGFL, GVAL…VYFL, AWLF…MIVG, IIIA…ISLW, MLAA…LKRY, LVVM…GLII, YKAA…IVLA, and VFFL…FWLF.

Belongs to the WzyE family. In terms of assembly, probably part of a complex composed of WzxE, WzyE and WzzE.

The protein localises to the cell inner membrane. Its pathway is bacterial outer membrane biogenesis; enterobacterial common antigen biosynthesis. Its function is as follows. Probably involved in the polymerization of enterobacterial common antigen (ECA) trisaccharide repeat units. This chain is Probable ECA polymerase, found in Salmonella arizonae (strain ATCC BAA-731 / CDC346-86 / RSK2980).